Reading from the N-terminus, the 181-residue chain is Regulator of G-protein signaling 5 (181 aa).

The RGS domain occupies 64 to 180; that stretch reads SLDKLLQNSY…VRSEFYKELI (117 aa).

Expressed in heart and muscle.

The protein resides in the cytoplasm. The protein localises to the membrane. Inhibits signal transduction by increasing the GTPase activity of G protein alpha subunits thereby driving them into their inactive GDP-bound form. Binds to G(i)-alpha and G(o)-alpha, but not to G(s)-alpha. This Mus musculus (Mouse) protein is Regulator of G-protein signaling 5 (Rgs5).